A 288-amino-acid polypeptide reads, in one-letter code: 4-hydroxybenzoate octaprenyltransferase (288 aa).

The next 6 membrane-spanning stretches (helical) occupy residues 20–40 (IGTL…AGGL), 43–63 (LKVF…GCII), 96–116 (LFVV…PLVV), 210–230 (QIIG…GMVA), 234–254 (AIYA…QKLI), and 262–282 (CFTA…ALML).

This sequence belongs to the UbiA prenyltransferase family. Mg(2+) is required as a cofactor.

The protein localises to the cell inner membrane. The enzyme catalyses all-trans-octaprenyl diphosphate + 4-hydroxybenzoate = 4-hydroxy-3-(all-trans-octaprenyl)benzoate + diphosphate. Its pathway is cofactor biosynthesis; ubiquinone biosynthesis. In terms of biological role, catalyzes the prenylation of para-hydroxybenzoate (PHB) with an all-trans polyprenyl group. Mediates the second step in the final reaction sequence of ubiquinone-8 (UQ-8) biosynthesis, which is the condensation of the polyisoprenoid side chain with PHB, generating the first membrane-bound Q intermediate 3-octaprenyl-4-hydroxybenzoate. The protein is 4-hydroxybenzoate octaprenyltransferase of Shewanella pealeana (strain ATCC 700345 / ANG-SQ1).